A 514-amino-acid chain; its full sequence is Glutamyl-tRNA(Gln) amidotransferase subunit B, mitochondrial (514 aa).

The protein belongs to the GatB/GatE family. GatB subfamily. As to quaternary structure, subunit of the heterotrimeric GatCAB amidotransferase (AdT) complex, composed of A, B and C subunits.

The protein localises to the mitochondrion. The catalysed reaction is L-glutamyl-tRNA(Gln) + L-glutamine + ATP + H2O = L-glutaminyl-tRNA(Gln) + L-glutamate + ADP + phosphate + H(+). Allows the formation of correctly charged Gln-tRNA(Gln) through the transamidation of misacylated Glu-tRNA(Gln) in the mitochondria. The reaction takes place in the presence of glutamine and ATP through an activated gamma-phospho-Glu-tRNA(Gln). This Naegleria gruberi (Amoeba) protein is Glutamyl-tRNA(Gln) amidotransferase subunit B, mitochondrial.